We begin with the raw amino-acid sequence, 387 residues long: Ferrochelatase (387 aa).

Fe cation is bound by residues His196 and Glu277.

The protein belongs to the ferrochelatase family.

Its subcellular location is the cytoplasm. The catalysed reaction is heme b + 2 H(+) = protoporphyrin IX + Fe(2+). It functions in the pathway porphyrin-containing compound metabolism; protoheme biosynthesis; protoheme from protoporphyrin-IX: step 1/1. In terms of biological role, catalyzes the ferrous insertion into protoporphyrin IX. The polypeptide is Ferrochelatase (Synechococcus sp. (strain RCC307)).